A 77-amino-acid polypeptide reads, in one-letter code: MKLIIFTGLFLFAIVSLIEAEEESGRVCIPLNGECSKSPNKCCDNINCDCYLRFEKGVQTGRPCFCTEKDVIFERDE.

An N-terminal signal peptide occupies residues 1 to 20 (MKLIIFTGLFLFAIVSLIEA). Residues 21-26 (EEESGR) constitute a propeptide that is removed on maturation.

It belongs to the neurotoxin 19 (CSTX) family. 09 (U10-Lctx) subfamily. Contains 4 disulfide bonds. As to expression, expressed by the venom gland.

Its subcellular location is the secreted. This is U10-lycotoxin-Ls1d from Lycosa singoriensis (Wolf spider).